A 277-amino-acid chain; its full sequence is Nickel transport system permease protein NikC (277 aa).

The Cytoplasmic segment spans residues 1–12 (MNFFLSSRWSVR). Residues 13 to 33 (LALIIIALLALIALTSQWWLP) form a helical membrane-spanning segment. Over 34-78 (YDPQAIDLPSRLLSPDAQHWLGTDHLGRDIFSRLMAATRVSLGSV) the chain is Periplasmic. The ABC transmembrane type-1 domain maps to 67–260 (LMAATRVSLG…ISVMAFNLVG (194 aa)). The helical transmembrane segment at 79-99 (MACLLLVLTLGLVIGGSAGLI) threads the bilayer. Residues 100–120 (GGRVDQATMRVADMFMTFPTS) lie on the Cytoplasmic side of the membrane. The chain crosses the membrane as a helical span at residues 121–141 (ILSFFMVGVLGTGLTNVIIAI). The Periplasmic segment spans residues 142 to 183 (ALSHWAWYARMVRSLVISLRQREFVLASRLSGAGHVRVFVDH). A helical membrane pass occupies residues 184–204 (LAGAVIPSLLVLATLDIGHMM). At 205–207 (LHV) the chain is on the cytoplasmic side. A helical transmembrane segment spans residues 208 to 228 (AGMSFLGLGVTAPTAEWGVMI). Topologically, residues 229 to 239 (NDARQYIWTQP) are periplasmic. Residues 240–260 (LQMFWPGLALFISVMAFNLVG) traverse the membrane as a helical segment. Residues 261-277 (DALRDHLDPHLVTEHAH) lie on the Cytoplasmic side of the membrane.

This sequence belongs to the binding-protein-dependent transport system permease family. OppBC subfamily. In terms of assembly, probably forms a heterodimeric pore with NikB.

It localises to the cell inner membrane. Involved in a nickel transport system, probably translocates nickel through the bacterial inner membrane. The polypeptide is Nickel transport system permease protein NikC (nikC) (Escherichia coli O157:H7).